The following is a 90-amino-acid chain: Small ribosomal subunit protein bS16 (90 aa).

It belongs to the bacterial ribosomal protein bS16 family.

In Oceanobacillus iheyensis (strain DSM 14371 / CIP 107618 / JCM 11309 / KCTC 3954 / HTE831), this protein is Small ribosomal subunit protein bS16.